A 136-amino-acid polypeptide reads, in one-letter code: Aspartate 1-decarboxylase (136 aa).

Ser-25 acts as the Schiff-base intermediate with substrate; via pyruvic acid in catalysis. Ser-25 is modified (pyruvic acid (Ser)). Residue Thr-57 coordinates substrate. Tyr-58 functions as the Proton donor in the catalytic mechanism. 73-75 (GAA) is a substrate binding site.

It belongs to the PanD family. Heterooctamer of four alpha and four beta subunits. Pyruvate is required as a cofactor. In terms of processing, is synthesized initially as an inactive proenzyme, which is activated by self-cleavage at a specific serine bond to produce a beta-subunit with a hydroxyl group at its C-terminus and an alpha-subunit with a pyruvoyl group at its N-terminus.

Its subcellular location is the cytoplasm. It carries out the reaction L-aspartate + H(+) = beta-alanine + CO2. The protein operates within cofactor biosynthesis; (R)-pantothenate biosynthesis; beta-alanine from L-aspartate: step 1/1. Catalyzes the pyruvoyl-dependent decarboxylation of aspartate to produce beta-alanine. This is Aspartate 1-decarboxylase from Acidothermus cellulolyticus (strain ATCC 43068 / DSM 8971 / 11B).